The following is a 356-amino-acid chain: MVLNMESTGEAVRSTTGNDGGITVVRSDAPSDFHVAQRSESSNQSPTSVTPPPPQPSSHHTAPPPLQISTVTTTTTTAAMEGISGGLMKKKRGRPRKYGPDGTVVALSPKPISSAPAPSHLPPPSSHVIDFSASEKRSKVKPTNSFNRTKYHHQVENLGEWAPCSVGGNFTPHIITVNTGEDVTMKIISFSQQGPRSICVLSANGVISSVTLRQPDSSGGTLTYEGRFEILSLSGSFMPNDSGGTRSRTGGMSVSLASPDGRVVGGGLAGLLVAASPVQVVVGSFLAGTDHQDQKPKKNKHDFMLSSPTAAIPISSAADHRTIHSVSSLPVNNNTWQTSLASDPRNKHTDINVNVT.

The interval 1 to 127 (MVLNMESTGE…PSHLPPPSSH (127 aa)) is disordered. Pro residues predominate over residues 49-66 (VTPPPPQPSSHHTAPPPL). A compositionally biased stretch (basic residues) spans 88 to 97 (MKKKRGRPRK). Residues 89–97 (KKKRGRPRK) carry the Bipartite nuclear localization signal motif. Positions 89 to 101 (KKKRGRPRKYGPD) form a DNA-binding region, a.T hook. Over residues 106–118 (ALSPKPISSAPAP) the composition is skewed to low complexity. The PPC domain occupies 167 to 309 (GGNFTPHIIT…KHDFMLSSPT (143 aa)). Positions 270–287 (GLLVAASPVQVVVGSFLA) are required for nuclear localization. Residues 295–302 (KPKKNKHD) carry the Nuclear localization signal motif.

Its subcellular location is the nucleus. The protein resides in the nucleoplasm. It is found in the chromosome. Functionally, transcription factor that specifically binds AT-rich DNA sequences related to the nuclear matrix attachment regions (MARs). May play a function in the positioning of chromatin fibers within the nucleus. This Arabidopsis thaliana (Mouse-ear cress) protein is AT-hook motif nuclear-localized protein 1.